The chain runs to 120 residues: Large ribosomal subunit protein uL18 (120 aa).

Residues Met-1–Thr-23 form a disordered region. Positions Ser-8–Ile-20 are enriched in basic residues.

The protein belongs to the universal ribosomal protein uL18 family. In terms of assembly, part of the 50S ribosomal subunit; part of the 5S rRNA/L5/L18/L25 subcomplex. Contacts the 5S and 23S rRNAs.

Its function is as follows. This is one of the proteins that bind and probably mediate the attachment of the 5S RNA into the large ribosomal subunit, where it forms part of the central protuberance. This is Large ribosomal subunit protein uL18 from Microcystis aeruginosa (strain NIES-843 / IAM M-2473).